A 483-amino-acid chain; its full sequence is Glutamate--tRNA ligase (483 aa).

Residues 11 to 21 (PSPTGHLHIGN) carry the 'HIGH' region motif. The Zn(2+) site is built by cysteine 108, cysteine 110, cysteine 135, and histidine 137. The short motif at 252 to 256 (KLSKR) is the 'KMSKS' region element. Lysine 255 lines the ATP pocket.

This sequence belongs to the class-I aminoacyl-tRNA synthetase family. Glutamate--tRNA ligase type 1 subfamily. Monomer. Requires Zn(2+) as cofactor.

The protein resides in the cytoplasm. It catalyses the reaction tRNA(Glu) + L-glutamate + ATP = L-glutamyl-tRNA(Glu) + AMP + diphosphate. Catalyzes the attachment of glutamate to tRNA(Glu) in a two-step reaction: glutamate is first activated by ATP to form Glu-AMP and then transferred to the acceptor end of tRNA(Glu). In Bacillus pumilus (strain SAFR-032), this protein is Glutamate--tRNA ligase.